A 185-amino-acid chain; its full sequence is HTH-type transcriptional regulator PuuR (185 aa).

The interval 1–20 is disordered; that stretch reads MSDEGLAPGKRLSEIRQQQG. An HTH cro/C1-type domain is found at 12–66; the sequence is LSEIRQQQGLSQRRAAELSGLTHSAISTIEQDKVSPAISTLQKLLKVYGLSLSEF. Positions 23-42 form a DNA-binding region, H-T-H motif; the sequence is QRRAAELSGLTHSAISTIEQ. Residues 111–178 form the Cupin type-2 domain; that stretch reads FETYQPGTTT…TSAGICRIIS (68 aa).

The protein operates within amine and polyamine degradation; putrescine degradation [regulation]. Functionally, represses puuA, puuD and puuP. This Escherichia coli (strain K12) protein is HTH-type transcriptional regulator PuuR (puuR).